The following is a 149-amino-acid chain: 2S seed storage albumin protein (149 aa).

Positions 1–22 are cleaved as a signal peptide; it reads MKLFIILATATLLIAATQAKYL. 4 disulfides stabilise this stretch: cysteine 38–cysteine 98, cysteine 52–cysteine 87, cysteine 88–cysteine 133, and cysteine 100–cysteine 140. 4 no IgE-binding regions span residues 41–53, 68–81, 84–95, and 97–105; these read QVKM…VKCN, ALSR…ESEE, LRGCCVAMKEME, and ECVCEWMKM. Residues 108 to 117 are igE-binding; that stretch reads ENQKGRIGET. The tract at residues 121–131 is no IgE-binding; it reads KGIRDLKELPN. The igE-binding stretch occupies residues 132–141; that stretch reads KCGISEMECH.

This sequence belongs to the 2S seed storage albumins family. In terms of tissue distribution, expressed in seeds (at protein level). Expressed in seeds.

Seed storage protein. The polypeptide is 2S seed storage albumin protein (Fagopyrum tataricum (Tartarian buckwheat)).